The chain runs to 502 residues: Lysine--tRNA ligase (502 aa).

Glu-403 and Glu-410 together coordinate Mg(2+).

The protein belongs to the class-II aminoacyl-tRNA synthetase family. Homodimer. Requires Mg(2+) as cofactor.

The protein resides in the cytoplasm. The catalysed reaction is tRNA(Lys) + L-lysine + ATP = L-lysyl-tRNA(Lys) + AMP + diphosphate. The protein is Lysine--tRNA ligase of Synechococcus sp. (strain CC9902).